We begin with the raw amino-acid sequence, 55 residues long: Large ribosomal subunit protein bL33A (55 aa).

This sequence belongs to the bacterial ribosomal protein bL33 family.

The chain is Large ribosomal subunit protein bL33A from Salinispora tropica (strain ATCC BAA-916 / DSM 44818 / JCM 13857 / NBRC 105044 / CNB-440).